The primary structure comprises 411 residues: Putative competence-damage inducible protein (411 aa).

It belongs to the CinA family.

The chain is Putative competence-damage inducible protein from Alkaliphilus metalliredigens (strain QYMF).